A 183-amino-acid polypeptide reads, in one-letter code: ATP synthase subunit delta (183 aa).

It belongs to the ATPase delta chain family. F-type ATPases have 2 components, F(1) - the catalytic core - and F(0) - the membrane proton channel. F(1) has five subunits: alpha(3), beta(3), gamma(1), delta(1), epsilon(1). CF(0) has four main subunits: a(1), b(1), b'(1) and c(10-14). The alpha and beta chains form an alternating ring which encloses part of the gamma chain. F(1) is attached to F(0) by a central stalk formed by the gamma and epsilon chains, while a peripheral stalk is formed by the delta, b and b' chains.

The protein resides in the cellular thylakoid membrane. F(1)F(0) ATP synthase produces ATP from ADP in the presence of a proton or sodium gradient. F-type ATPases consist of two structural domains, F(1) containing the extramembraneous catalytic core and F(0) containing the membrane proton channel, linked together by a central stalk and a peripheral stalk. During catalysis, ATP synthesis in the catalytic domain of F(1) is coupled via a rotary mechanism of the central stalk subunits to proton translocation. Its function is as follows. This protein is part of the stalk that links CF(0) to CF(1). It either transmits conformational changes from CF(0) to CF(1) or is implicated in proton conduction. This chain is ATP synthase subunit delta, found in Trichormus variabilis (strain ATCC 29413 / PCC 7937) (Anabaena variabilis).